The sequence spans 574 residues: Uric acid-xanthine permease (574 aa).

The tract at residues 1–20 is disordered; that stretch reads MDNSIHSTDGPDSVIPNSNP. 12 helical membrane passes run 77 to 97, 111 to 131, 141 to 161, 188 to 209, 217 to 237, 264 to 284, 296 to 315, 338 to 361, 427 to 447, 451 to 471, 482 to 502, and 522 to 542; these read LLAF…VVTP, LQQY…MVQI, YYIG…ISVA, AYGA…LAFV, IFPP…LIGT, LPWG…SIIL, CSVV…CGYF, VYGP…IGDV, CCLI…IVAI, VMGG…QAIV, FILT…TWFG, and LVLE…NAIM. Residues 555–574 form a disordered region; that stretch reads MPVSAHDNRDGEAEYQSKQA. Lys-572 participates in a covalent cross-link: Glycyl lysine isopeptide (Lys-Gly) (interchain with G-Cter in ubiquitin).

This sequence belongs to the nucleobase:cation symporter-2 (NCS2) (TC 2.A.40) family. Ubiquitinated by hulA. Ubiquitination leads to internalization, sorting into the endosomal pathway to the vacuolar lumen where uapA is eventually degraded.

Its subcellular location is the cell membrane. Its function is as follows. Uric acid-xanthine transporter. The polypeptide is Uric acid-xanthine permease (uapA) (Emericella nidulans (strain FGSC A4 / ATCC 38163 / CBS 112.46 / NRRL 194 / M139) (Aspergillus nidulans)).